Reading from the N-terminus, the 422-residue chain is MQHPKPFCAPAAPQEGFSPQSLEGAEVLGNQPAPTCAEPPPAMGSLNLYHPPDPEKEVFPAPPAGFQMAPCGCFFDPRIYRIEWTTPDLGQSALYKLAASSGGPAGVPSAPGSYLLEPQPYLKAPGLPPYPHYQQAPGGPQFLLPYFPPEGPGPEALGFVGDAGPAAFVELPLPPLEEGPAPLPPPPPKENKPPPVLITLPAEPTLPPDAYSHLQGHLGHFPGPEPLAFPVKELQGSGARPGVPLYPPGLSELKVAEVKEGALLGAGKAKAPKTARALALPDKVLLEDAMKLFDCLPGASEPEGTLCEVPGPALPDSSGGNSADDIRSLCLPEELLSFDYSVPEILDTVSNVDYFFNFKALDEEQPPHPGPPATNTPAPILSGKRKASTAKKGKPGRKARQPAGPASATPPGPREDLGATPH.

3 disordered regions span residues 1–35 (MQHP…PAPT), 306–325 (LCEV…SADD), and 363–422 (EEQP…ATPH). A compositionally biased stretch (basic residues) spans 383-400 (GKRKASTAKKGKPGRKAR). Over residues 413–422 (PREDLGATPH) the composition is skewed to basic and acidic residues.

The chain is Proline-rich protein 22 (PRR22) from Homo sapiens (Human).